We begin with the raw amino-acid sequence, 335 residues long: Deoxyhypusine hydroxylase (335 aa).

5 HEAT-like PBS-type repeats span residues 71–97, 104–130, 200–233, 238–264, and 271–298; these read LKHELAYCLGQTRNPESVPFLQQVAKD, CRHEAAEALGALGYEDSLEILKALRDN, LRYRAMFALRDLASPPDLPTATRAVEALAKGLKD, FRHEIAFVFGQLCHPASIPSLTEALSN, and VRHEAAEALGSLGDCEGVEETLRKFLND. Fe cation-binding residues include His-73, Glu-74, His-106, and Glu-107. His-240, Glu-241, His-273, and Glu-274 together coordinate Fe cation.

It belongs to the deoxyhypusine hydroxylase family. Requires Fe(2+) as cofactor.

The protein resides in the cytoplasm. The protein localises to the nucleus. It catalyses the reaction [eIF5A protein]-deoxyhypusine + AH2 + O2 = [eIF5A protein]-hypusine + A + H2O. It functions in the pathway protein modification; eIF5A hypusination. Its function is as follows. Catalyzes the hydroxylation of the N(6)-(4-aminobutyl)-L-lysine intermediate to form hypusine, an essential post-translational modification only found in mature eIF-5A factor. In Neosartorya fischeri (strain ATCC 1020 / DSM 3700 / CBS 544.65 / FGSC A1164 / JCM 1740 / NRRL 181 / WB 181) (Aspergillus fischerianus), this protein is Deoxyhypusine hydroxylase (lia1).